Reading from the N-terminus, the 559-residue chain is Phosphoinositide 3-phosphatase (559 aa).

The Myotubularin phosphatase domain occupies 120-541 (SWKSFLLENE…SSLRWWSASF (422 aa)). The active-site Phosphocysteine intermediate is Cys342.

This sequence belongs to the protein-tyrosine phosphatase family. Non-receptor class myotubularin subfamily.

The protein localises to the cytoplasm. It catalyses the reaction a 1,2-diacyl-sn-glycero-3-phospho-(1D-myo-inositol-3-phosphate) + H2O = a 1,2-diacyl-sn-glycero-3-phospho-(1D-myo-inositol) + phosphate. Its function is as follows. Lipid phosphatase which dephosphorylates phosphatidylinositol 3-monophosphate (PI3P). Involved in the control of PI3P-dependent signaling and in the maintenance of endosomal system integrity. The polypeptide is Phosphoinositide 3-phosphatase (Schizosaccharomyces pombe (strain 972 / ATCC 24843) (Fission yeast)).